A 159-amino-acid chain; its full sequence is NADH-quinone oxidoreductase subunit B (159 aa).

4 residues coordinate [4Fe-4S] cluster: C37, C38, C102, and C132.

Belongs to the complex I 20 kDa subunit family. As to quaternary structure, NDH-1 is composed of 14 different subunits. Subunits NuoB, C, D, E, F, and G constitute the peripheral sector of the complex. Requires [4Fe-4S] cluster as cofactor.

Its subcellular location is the cell inner membrane. The catalysed reaction is a quinone + NADH + 5 H(+)(in) = a quinol + NAD(+) + 4 H(+)(out). Functionally, NDH-1 shuttles electrons from NADH, via FMN and iron-sulfur (Fe-S) centers, to quinones in the respiratory chain. Couples the redox reaction to proton translocation (for every two electrons transferred, four hydrogen ions are translocated across the cytoplasmic membrane), and thus conserves the redox energy in a proton gradient. This Polaromonas naphthalenivorans (strain CJ2) protein is NADH-quinone oxidoreductase subunit B.